The sequence spans 293 residues: Probable chromosome 2-partitioning protein ParB (293 aa).

Belongs to the ParB family.

Functionally, involved in chromosome partition. Localize to both poles of the predivisional cell following completion of DNA replication. Binds to the DNA origin of replication. The protein is Probable chromosome 2-partitioning protein ParB (parB2) of Deinococcus radiodurans (strain ATCC 13939 / DSM 20539 / JCM 16871 / CCUG 27074 / LMG 4051 / NBRC 15346 / NCIMB 9279 / VKM B-1422 / R1).